The chain runs to 252 residues: Cell division protein ZapD (252 aa).

The protein belongs to the ZapD family. Interacts with FtsZ.

It is found in the cytoplasm. In terms of biological role, cell division factor that enhances FtsZ-ring assembly. Directly interacts with FtsZ and promotes bundling of FtsZ protofilaments, with a reduction in FtsZ GTPase activity. In Chromobacterium violaceum (strain ATCC 12472 / DSM 30191 / JCM 1249 / CCUG 213 / NBRC 12614 / NCIMB 9131 / NCTC 9757 / MK), this protein is Cell division protein ZapD.